The primary structure comprises 309 residues: N(5)-(carboxyethyl)ornithine synthase (309 aa).

Pyruvate-binding residues include Arg15, Lys71, and His92. NADP(+) is bound at residue 171–176; the sequence is GSGNVA.

Belongs to the AlaDH/PNT family. CEOS subfamily. In terms of assembly, homotetramer.

It catalyses the reaction N(5)-[1(S)-1-carboxyethyl]-L-ornithine + NADP(+) + H2O = L-ornithine + pyruvate + NADPH + H(+). In terms of biological role, catalyzes the NADPH-dependent reductive condensation between pyruvic acid and the side chain amino group of L-ornithine to form N(5)-(L-1-carboxyethyl)-L-ornithine. To a lesser extent, can also use L-lysine as substrate (yielding N(6)-(L-1-carboxyethyl)-L-lysine). The protein is N(5)-(carboxyethyl)ornithine synthase (ceo) of Lactococcus lactis subsp. lactis (strain IL1403) (Streptococcus lactis).